The primary structure comprises 287 residues: uncharacterized protein (287 aa).

Active-site charge relay system residues include T43 and Y104. Y130 functions as the Proton donor in the catalytic mechanism. The Schiff-base intermediate with substrate role is filled by K158.

It belongs to the DapA family. Homotetramer.

It is found in the cytoplasm. This is an uncharacterized protein from Pyrococcus horikoshii (strain ATCC 700860 / DSM 12428 / JCM 9974 / NBRC 100139 / OT-3).